A 114-amino-acid polypeptide reads, in one-letter code: UPF0342 protein SERP1381 (114 aa).

It belongs to the UPF0342 family.

The protein is UPF0342 protein SERP1381 of Staphylococcus epidermidis (strain ATCC 35984 / DSM 28319 / BCRC 17069 / CCUG 31568 / BM 3577 / RP62A).